Consider the following 88-residue polypeptide: Apolipoprotein C-I (88 aa).

The first 26 residues, 1-26, serve as a signal peptide directing secretion; the sequence is MRLFLSLPVLVVVLAMVLEGPAPTQA.

This sequence belongs to the apolipoprotein C1 family.

The protein localises to the secreted. In terms of biological role, inhibitor of lipoprotein binding to the low density lipoprotein (LDL) receptor, LDL receptor-related protein, and very low density lipoprotein (VLDL) receptor. Associates with high density lipoproteins (HDL) and the triacylglycerol-rich lipoproteins in the plasma and makes up about 10% of the protein of the VLDL and 2% of that of HDL. Appears to interfere directly with fatty acid uptake and is also the major plasma inhibitor of cholesteryl ester transfer protein (CETP). Binds free fatty acids and reduces their intracellular esterification. Modulates the interaction of APOE with beta-migrating VLDL and inhibits binding of beta-VLDL to the LDL receptor-related protein. The sequence is that of Apolipoprotein C-I (APOC1) from Phoca vitulina (Harbor seal).